Consider the following 408-residue polypeptide: LL-diaminopimelate aminotransferase (408 aa).

The substrate site is built by Y15 and G42. Residues Y72, 108-109 (SK), Y132, N187, Y218, and 246-248 (SFS) each bind pyridoxal 5'-phosphate. Substrate contacts are provided by K109, Y132, and N187. K249 carries the post-translational modification N6-(pyridoxal phosphate)lysine. 2 residues coordinate pyridoxal 5'-phosphate: R257 and N292. N292 and R388 together coordinate substrate.

It belongs to the class-I pyridoxal-phosphate-dependent aminotransferase family. LL-diaminopimelate aminotransferase subfamily. As to quaternary structure, homodimer. Pyridoxal 5'-phosphate is required as a cofactor.

It catalyses the reaction (2S,6S)-2,6-diaminopimelate + 2-oxoglutarate = (S)-2,3,4,5-tetrahydrodipicolinate + L-glutamate + H2O + H(+). It participates in amino-acid biosynthesis; L-lysine biosynthesis via DAP pathway; LL-2,6-diaminopimelate from (S)-tetrahydrodipicolinate (aminotransferase route): step 1/1. Functionally, involved in the synthesis of meso-diaminopimelate (m-DAP or DL-DAP), required for both lysine and peptidoglycan biosynthesis. Catalyzes the direct conversion of tetrahydrodipicolinate to LL-diaminopimelate. This chain is LL-diaminopimelate aminotransferase, found in Prochlorococcus marinus (strain MIT 9515).